A 140-amino-acid chain; its full sequence is Large ribosomal subunit protein mL43 (140 aa).

This sequence belongs to the mitochondrion-specific ribosomal protein mL43 family. Component of the mitochondrial large ribosomal subunit (mt-LSU). Mature yeast 74S mitochondrial ribosomes consist of a small (37S) and a large (54S) subunit. The 37S small subunit contains a 15S ribosomal RNA (15S mt-rRNA) and 34 different proteins. The 54S large subunit contains a 21S rRNA (21S mt-rRNA) and 46 different proteins.

The protein resides in the mitochondrion. Its function is as follows. Component of the mitochondrial ribosome (mitoribosome), a dedicated translation machinery responsible for the synthesis of mitochondrial genome-encoded proteins, including at least some of the essential transmembrane subunits of the mitochondrial respiratory chain. The mitoribosomes are attached to the mitochondrial inner membrane and translation products are cotranslationally integrated into the membrane. Also has an extraribosomal function, being essential for mitochondrial genome integrity. May interact with MHR1 to take part in the mtDNA repair mechanism. This Saccharomyces cerevisiae (strain ATCC 204508 / S288c) (Baker's yeast) protein is Large ribosomal subunit protein mL43 (MRPL51).